The chain runs to 316 residues: Protoheme IX farnesyltransferase (316 aa).

The next 9 membrane-spanning stretches (helical) occupy residues 32 to 52, 53 to 73, 93 to 113, 116 to 136, 152 to 172, 180 to 200, 221 to 241, 252 to 271, and 289 to 309; these read VMSL…GHIH, PVLG…SGAL, IPAG…LSGF, VILG…TIFF, NIVI…ACVT, TVLF…LALF, VTKH…VLPS, LVAA…VWRM, and IFYL…PVLV.

Belongs to the UbiA prenyltransferase family. Protoheme IX farnesyltransferase subfamily.

Its subcellular location is the cell inner membrane. The enzyme catalyses heme b + (2E,6E)-farnesyl diphosphate + H2O = Fe(II)-heme o + diphosphate. Its pathway is porphyrin-containing compound metabolism; heme O biosynthesis; heme O from protoheme: step 1/1. Functionally, converts heme B (protoheme IX) to heme O by substitution of the vinyl group on carbon 2 of heme B porphyrin ring with a hydroxyethyl farnesyl side group. The polypeptide is Protoheme IX farnesyltransferase (Rhizobium johnstonii (strain DSM 114642 / LMG 32736 / 3841) (Rhizobium leguminosarum bv. viciae)).